The primary structure comprises 353 residues: E3 ubiquitin-protein ligase Os03g0188200 (353 aa).

The chain crosses the membrane as a helical span at residues 48–68 (VVVLVALITAFVLLTVFSVLI). The segment at 133–175 (CAVCLAEFADSDELRVLPACCHVFHPDCIDPWLAAAVTCPLCR) adopts an RING-type; atypical zinc-finger fold. Composition is skewed to basic and acidic residues over residues 308–318 (ADWDAGEEHGG) and 340–353 (GSKE…LNRV). The disordered stretch occupies residues 308 to 353 (ADWDAGEEHGGSKRVHPVAGAQDETPSGSGSDGSKENSDSDALNRV).

It is found in the membrane. It carries out the reaction S-ubiquitinyl-[E2 ubiquitin-conjugating enzyme]-L-cysteine + [acceptor protein]-L-lysine = [E2 ubiquitin-conjugating enzyme]-L-cysteine + N(6)-ubiquitinyl-[acceptor protein]-L-lysine.. It participates in protein modification; protein ubiquitination. Functionally, possesses E3 ubiquitin-protein ligase in vitro. The protein is E3 ubiquitin-protein ligase Os03g0188200 of Oryza sativa subsp. japonica (Rice).